The following is a 125-amino-acid chain: Small ribosomal subunit protein uS12 (125 aa).

3-methylthioaspartic acid is present on Asp-89.

This sequence belongs to the universal ribosomal protein uS12 family. Part of the 30S ribosomal subunit. Contacts proteins S8 and S17. May interact with IF1 in the 30S initiation complex.

With S4 and S5 plays an important role in translational accuracy. Functionally, interacts with and stabilizes bases of the 16S rRNA that are involved in tRNA selection in the A site and with the mRNA backbone. Located at the interface of the 30S and 50S subunits, it traverses the body of the 30S subunit contacting proteins on the other side and probably holding the rRNA structure together. The combined cluster of proteins S8, S12 and S17 appears to hold together the shoulder and platform of the 30S subunit. This chain is Small ribosomal subunit protein uS12, found in Ralstonia nicotianae (strain ATCC BAA-1114 / GMI1000) (Ralstonia solanacearum).